A 761-amino-acid chain; its full sequence is Subtilisin-like protease SBT3.15 (761 aa).

The first 21 residues, 1-21, serve as a signal peptide directing secretion; that stretch reads MENSFLSSKLVFLLAIALVLF. Positions 22 to 120 are cleaved as a propeptide — activation peptide; sequence LNTELSFLTA…VIPNRILKLK (99 aa). In terms of domain architecture, Inhibitor I9 spans 41–119; that stretch reads VYIVYLGQRE…HVIPNRILKL (79 aa). The region spanning 134–613 is the Peptidase S8 domain; the sequence is PTSFSSSSSA…GGLVNPEKAA (480 aa). The N-linked (GlcNAc...) asparagine glycan is linked to asparagine 151. The active-site Charge relay system is the aspartate 164. An N-linked (GlcNAc...) asparagine glycan is attached at asparagine 197. The active-site Charge relay system is the histidine 241. N-linked (GlcNAc...) asparagine glycosylation is found at asparagine 256 and asparagine 384. The Charge relay system role is filled by serine 544. Asparagine 636 carries an N-linked (GlcNAc...) asparagine glycan.

The protein belongs to the peptidase S8 family.

It localises to the secreted. In Arabidopsis thaliana (Mouse-ear cress), this protein is Subtilisin-like protease SBT3.15.